A 439-amino-acid chain; its full sequence is Xaa-Pro dipeptidase (439 aa).

Asp244, Asp255, His335, Glu380, and Glu418 together coordinate Mn(2+).

The protein belongs to the peptidase M24B family. Bacterial-type prolidase subfamily. Requires Mn(2+) as cofactor.

The catalysed reaction is Xaa-L-Pro dipeptide + H2O = an L-alpha-amino acid + L-proline. In terms of biological role, splits dipeptides with a prolyl residue in the C-terminal position. The polypeptide is Xaa-Pro dipeptidase (Shewanella frigidimarina (strain NCIMB 400)).